Consider the following 130-residue polypeptide: DNA-directed RNA polymerase subunit omega (130 aa).

A disordered region spans residues 107 to 130; sequence SLDVSQESHDDEIDDQDSGEEVPI. The span at 115-130 shows a compositional bias: acidic residues; that stretch reads HDDEIDDQDSGEEVPI.

Belongs to the RNA polymerase subunit omega family. As to quaternary structure, the RNAP catalytic core consists of 2 alpha, 1 beta, 1 beta' and 1 omega subunit. When a sigma factor is associated with the core the holoenzyme is formed, which can initiate transcription.

It catalyses the reaction RNA(n) + a ribonucleoside 5'-triphosphate = RNA(n+1) + diphosphate. Promotes RNA polymerase assembly. Latches the N- and C-terminal regions of the beta' subunit thereby facilitating its interaction with the beta and alpha subunits. This is DNA-directed RNA polymerase subunit omega from Wolbachia pipientis subsp. Culex pipiens (strain wPip).